The sequence spans 357 residues: Cinnamyl alcohol dehydrogenase 1 (357 aa).

The region spanning 20-348 is the Enoyl reductase (ER) domain; the sequence is GILSPYTYTL…KNDVRYRFVV (329 aa). Residue cysteine 47 participates in Zn(2+) binding. Serine 49 is an NADP(+) binding site. Histidine 69, glutamate 70, cysteine 100, cysteine 103, cysteine 106, cysteine 114, and cysteine 163 together coordinate Zn(2+). NADP(+)-binding positions include threonine 167, 188-193, 211-216, threonine 251, glycine 275, and 298-300; these read GLGGVG, SSSDKK, and SFI.

The protein belongs to the zinc-containing alcohol dehydrogenase family. In terms of assembly, homodimer. Requires Zn(2+) as cofactor. Accumulates mainly in the placenta of red fruits, and, to a lower extent, in green fruits placenta, pericarp and seeds.

The protein resides in the cytoplasm. The catalysed reaction is (E)-cinnamyl alcohol + NADP(+) = (E)-cinnamaldehyde + NADPH + H(+). The enzyme catalyses (E)-coniferol + NADP(+) = (E)-coniferaldehyde + NADPH + H(+). It catalyses the reaction (E)-sinapyl alcohol + NADP(+) = (E)-sinapaldehyde + NADPH + H(+). It carries out the reaction (E)-4-coumaroyl alcohol + NADP(+) = (E)-4-coumaraldehyde + NADPH + H(+). The catalysed reaction is (E)-caffeyl alcohol + NADP(+) = (E)-caffeyl aldehyde + NADPH + H(+). The enzyme catalyses vanillin + NADPH + H(+) = 4-hydroxy-3-methoxy-benzenemethanol + NADP(+). It functions in the pathway aromatic compound metabolism; phenylpropanoid biosynthesis. Its activity is regulated as follows. Inhibited, in a concentration-dependent manner, by N-(O-hydroxyphenyl) sulfinamoyltertiobutyl acetate (OHPAS), a specific cinnamyl alcohol dehydrogenase (CAD) inhibitor, as well as by ethylenediaminetetraacetic acid (EDTA), a metalloenzyme inhibitor. In terms of biological role, involved in the biosynthesis of capsinoids natural products (e.g. capsiate), non-pungent alkaloids synthesized from phenylpropanoid intermediates in the placental tissue of sweet chili pepper fruit acting as repellant on herbivorous mammals. Catalyzes the reduction of vanillin to generate vanillyl alcohol, a precursor of capsiate, a non-pungent component that accumulates mainly in the placenta of mature red fruits, but also in green fruits to lower levels. Involved in lignin biosynthesis. Catalyzes the final step specific for the production of lignin monomers. Mediates the conversion of cinnamaldehyde and coniferaldehyde to cinnamyl alcohol and coniferyl alcohol, respectively. Catalyzes the NADPH-dependent reduction of 5-hydroxyconiferaldehyde, sinapaldehyde, 4-coumaraldehyde and caffeyl aldehyde to their respective alcohols. The polypeptide is Cinnamyl alcohol dehydrogenase 1 (Capsicum annuum (Capsicum pepper)).